The chain runs to 718 residues: MSTEGSAVDTLTIEEAAAELERLAKEIAHHDALYHGKDQPEISDADYDALKRRNDALEARFPELIREDSPSRHVGAAPSVTFSPVVHARPMLSLDNTFSQEDVQDFVAGVYRFLGRLPDQSIAFTAEPKIDGLSMSIRYENGRLVTAATRGDGTTGENVTANIRTIAEIPNELPKGVPAVVEIRGEVYMAKSDFLALNRQMEAEGKQTYVNPRNTAAGSLRQLDAKVTASRKLKFFAYAWGEMAEMPADTQFGMVQTFKDWGFPVNPLMKRLNSVADILAHYDEIGLERPDLDYDIDGVVYKVDSLELQQRLGFRSRSPRWATAHKFPAEQAFTEVEKIEIQVGRTGALTPVARLKPITVGGVVVTNATLHNEDYIKGIGNSGERIRPEEHDIREGDTVIVQRAGDVIPQILDVVMEKRAADARSYEFPKTCPVCGSHAVREVNEKTGKTDSVRRCTGGFICRAQATEHLKHFVSRNAFDIEGLGSKQVDFFFENEDPSLQIRTAPEIFTLEKRQQDSLTKLENIDGFGKVSVGKLYAAINERRSIALHRFIYALGIRHVGETTAKLLARSYGTYEAFATAMKEAAPLSGEAWTDLNAIEGIGEVVARAMVEFYKEPRNVEVIGRLLDEVTPAEAEQPVTAGSPVAGKTVVFTGSLEKFTRDEAKARAESLGAKVAGSVSKKTDIVVAGPGAGSKLDKARELGVQTMDEDEWLALISG.

Residues 44–48 (DADYD), 93–94 (SL), and Glu-127 contribute to the NAD(+) site. Lys-129 functions as the N6-AMP-lysine intermediate in the catalytic mechanism. Residues Arg-150, Glu-186, Lys-302, and Lys-326 each coordinate NAD(+). Residues Cys-432, Cys-435, Cys-456, and Cys-462 each coordinate Zn(2+). The BRCT domain occupies 640 to 718 (TAGSPVAGKT…EDEWLALISG (79 aa)).

This sequence belongs to the NAD-dependent DNA ligase family. LigA subfamily. Mg(2+) serves as cofactor. The cofactor is Mn(2+).

It carries out the reaction NAD(+) + (deoxyribonucleotide)n-3'-hydroxyl + 5'-phospho-(deoxyribonucleotide)m = (deoxyribonucleotide)n+m + AMP + beta-nicotinamide D-nucleotide.. DNA ligase that catalyzes the formation of phosphodiester linkages between 5'-phosphoryl and 3'-hydroxyl groups in double-stranded DNA using NAD as a coenzyme and as the energy source for the reaction. It is essential for DNA replication and repair of damaged DNA. The sequence is that of DNA ligase from Rhizobium etli (strain CIAT 652).